The primary structure comprises 468 residues: Uronate isomerase (468 aa).

Belongs to the metallo-dependent hydrolases superfamily. Uronate isomerase family.

It carries out the reaction D-glucuronate = D-fructuronate. The enzyme catalyses aldehydo-D-galacturonate = keto-D-tagaturonate. It participates in carbohydrate metabolism; pentose and glucuronate interconversion. The polypeptide is Uronate isomerase (Marinomonas sp. (strain MWYL1)).